The primary structure comprises 65 residues: Large ribosomal subunit protein bL35 (65 aa).

The tract at residues 1–26 (MPKIKTLRSAAKRFKKTESGKFKRKQ) is disordered.

It belongs to the bacterial ribosomal protein bL35 family.

The sequence is that of Large ribosomal subunit protein bL35 from Buchnera aphidicola subsp. Baizongia pistaciae (strain Bp).